The following is a 461-amino-acid chain: Adenine DNA glycosylase (461 aa).

The active-site Proton donor/acceptor is Glu69. 4 residues coordinate [4Fe-4S] cluster: Cys226, Cys233, Cys236, and Cys242. Positions 296 to 437 (QREERALVVI…RAALEIKKRK (142 aa)) constitute a Nudix hydrolase domain. Residues 340-366 (FGQESWPKDMDAEFQKSIAQWISNDSR) carry the Nudix box motif.

It belongs to the Nth/MutY family. Monomer. Requires [4Fe-4S] cluster as cofactor.

The catalysed reaction is Hydrolyzes free adenine bases from 7,8-dihydro-8-oxoguanine:adenine mismatched double-stranded DNA, leaving an apurinic site.. Functionally, adenine glycosylase active on G-A mispairs. Has glycosylase and nicking activities and is active at A/G and A/GO sites. The protein is Adenine DNA glycosylase (myh1) of Schizosaccharomyces pombe (strain 972 / ATCC 24843) (Fission yeast).